The following is a 156-amino-acid chain: 6,7-dimethyl-8-ribityllumazine synthase (156 aa).

5-amino-6-(D-ribitylamino)uracil-binding positions include Phe-23, 57-59 (SFE), and 81-83 (AVI). A (2S)-2-hydroxy-3-oxobutyl phosphate-binding site is contributed by 86–87 (GT). Residue His-89 is the Proton donor of the active site. Tyr-114 is a binding site for 5-amino-6-(D-ribitylamino)uracil. Arg-128 serves as a coordination point for (2S)-2-hydroxy-3-oxobutyl phosphate.

This sequence belongs to the DMRL synthase family. Forms an icosahedral capsid composed of 60 subunits, arranged as a dodecamer of pentamers.

The enzyme catalyses (2S)-2-hydroxy-3-oxobutyl phosphate + 5-amino-6-(D-ribitylamino)uracil = 6,7-dimethyl-8-(1-D-ribityl)lumazine + phosphate + 2 H2O + H(+). The protein operates within cofactor biosynthesis; riboflavin biosynthesis; riboflavin from 2-hydroxy-3-oxobutyl phosphate and 5-amino-6-(D-ribitylamino)uracil: step 1/2. Functionally, catalyzes the formation of 6,7-dimethyl-8-ribityllumazine by condensation of 5-amino-6-(D-ribitylamino)uracil with 3,4-dihydroxy-2-butanone 4-phosphate. This is the penultimate step in the biosynthesis of riboflavin. The polypeptide is 6,7-dimethyl-8-ribityllumazine synthase (Halorhodospira halophila (strain DSM 244 / SL1) (Ectothiorhodospira halophila (strain DSM 244 / SL1))).